Reading from the N-terminus, the 641-residue chain is Tegument protein UL35 (641 aa).

Disordered regions lie at residues 353 to 373, 500 to 572, and 587 to 641; these read ERGE…PREA, ASSS…PRQR, and AYSH…LRHL. A compositionally biased stretch (acidic residues) spans 358–367; that stretch reads GDEDEEQEND. Over residues 500–563 the composition is skewed to low complexity; the sequence is ASSSSASSSS…LSGSHGISSA (64 aa). A compositionally biased stretch (basic residues) spans 589–599; it reads SHHRRHRRRRS. Positions 632–641 are enriched in basic and acidic residues; the sequence is DDLAENLRHL.

The protein belongs to the herpesviridae pp85 family. As to quaternary structure, interacts with UL82. Interacts with isoform UL35A. Interacts with host UBP7; this interaction significantly inhibits the ability of USP7 to form nuclear bodies. Interacts with host DCAF1 (via C-terminus). Interacts with host SNX5; this interaction allows proper gB localization during viral assembly. Interacts with host TBK1; this interaction prevents type I interferon production. In terms of assembly, interacts with UL82. Interacts with isoform UL35. Interacts with host UBP7; this interaction significantly inhibits the ability of USP7 to form nuclear bodies. Interacts with host SNX5; this interaction allows proper gB localization during viral assembly.

The protein localises to the virion tegument. The protein resides in the host nucleus. It localises to the host cytoplasm. Its function is as follows. Plays important role in immediate-early gene expression through interaction with UL82. Forms nuclear bodies in host nucleus, independently of PML. In turn, UL35 nuclear bodies associate with and remodel PML bodies. Through interaction with host DCAF1, causes cells to accumulate in the G2 phase of the cell cycle by inducing a DNA damage response. Regulates viral assembly by controlling the localization of the essential gB through regulation of a retrograde transport pathway. This modulation occurs via binding and inhibition of host sorting nexin 5/SNX5. Also plays a role in the inhibition of pattern recognition receptor-mediated type I interferon signaling at the level of TBK1. Promotes cytoplasmic UL82 accumulation and inhibits UL35-containing nuclear bodies formation. Regulates viral assembly by controlling the localization of the essential gB through regulation of a retrograde transport pathway. This modulation occurs via binding and inhibition of host sorting nexin 5/SNX5. This Homo sapiens (Human) protein is Tegument protein UL35 (UL35).